A 20-amino-acid chain; its full sequence is Putative serine protease (20 aa).

This sequence belongs to the peptidase S1 family.

It localises to the secreted. Its function is as follows. Binds the A.niger cell wall component alpha-1,3-glucan, a fungal pathogen-associated molecular pattern (PAMP) that activates the host immune response. The protein is Putative serine protease of Galleria mellonella (Greater wax moth).